The following is a 176-amino-acid chain: ATP-dependent protease subunit HslV (176 aa).

The active site involves T2. Residues G157, C160, and T163 each coordinate Na(+).

Belongs to the peptidase T1B family. HslV subfamily. A double ring-shaped homohexamer of HslV is capped on each side by a ring-shaped HslU homohexamer. The assembly of the HslU/HslV complex is dependent on binding of ATP.

The protein resides in the cytoplasm. It carries out the reaction ATP-dependent cleavage of peptide bonds with broad specificity.. With respect to regulation, allosterically activated by HslU binding. In terms of biological role, protease subunit of a proteasome-like degradation complex believed to be a general protein degrading machinery. This is ATP-dependent protease subunit HslV from Pectobacterium atrosepticum (strain SCRI 1043 / ATCC BAA-672) (Erwinia carotovora subsp. atroseptica).